Here is a 166-residue protein sequence, read N- to C-terminus: Large ribosomal subunit protein uL10 (166 aa).

The protein belongs to the universal ribosomal protein uL10 family. As to quaternary structure, part of the ribosomal stalk of the 50S ribosomal subunit. The N-terminus interacts with L11 and the large rRNA to form the base of the stalk. The C-terminus forms an elongated spine to which L12 dimers bind in a sequential fashion forming a multimeric L10(L12)X complex.

Functionally, forms part of the ribosomal stalk, playing a central role in the interaction of the ribosome with GTP-bound translation factors. This chain is Large ribosomal subunit protein uL10, found in Shewanella denitrificans (strain OS217 / ATCC BAA-1090 / DSM 15013).